The primary structure comprises 288 residues: HTH-type transcriptional regulator CzcR (288 aa).

The 58-residue stretch at M1–T58 folds into the HTH lysR-type domain. Positions V18–K37 form a DNA-binding region, H-T-H motif.

The protein belongs to the LysR transcriptional regulatory family.

This is HTH-type transcriptional regulator CzcR (czcR) from Bacillus cereus (strain ATCC 10987 / NRS 248).